Consider the following 83-residue polypeptide: Translation initiation factor IF-1 (83 aa).

The 72-residue stretch at 1 to 72 (MAKEELIEMQ…SKGRITFRHL (72 aa)) folds into the S1-like domain.

Belongs to the IF-1 family. Component of the 30S ribosomal translation pre-initiation complex which assembles on the 30S ribosome in the order IF-2 and IF-3, IF-1 and N-formylmethionyl-tRNA(fMet); mRNA recruitment can occur at any time during PIC assembly.

It is found in the cytoplasm. Its function is as follows. One of the essential components for the initiation of protein synthesis. Stabilizes the binding of IF-2 and IF-3 on the 30S subunit to which N-formylmethionyl-tRNA(fMet) subsequently binds. Helps modulate mRNA selection, yielding the 30S pre-initiation complex (PIC). Upon addition of the 50S ribosomal subunit IF-1, IF-2 and IF-3 are released leaving the mature 70S translation initiation complex. The protein is Translation initiation factor IF-1 of Verminephrobacter eiseniae (strain EF01-2).